Consider the following 445-residue polypeptide: Histidine--tRNA ligase (445 aa).

The protein belongs to the class-II aminoacyl-tRNA synthetase family. Homodimer.

The protein resides in the cytoplasm. The catalysed reaction is tRNA(His) + L-histidine + ATP = L-histidyl-tRNA(His) + AMP + diphosphate + H(+). The protein is Histidine--tRNA ligase of Mycoplasma mobile (strain ATCC 43663 / 163K / NCTC 11711) (Mesomycoplasma mobile).